Reading from the N-terminus, the 506-residue chain is Glutamate--tRNA ligase (506 aa).

The short motif at 23–33 (PSPTGTPHVGL) is the 'HIGH' region element. Residues 267-271 (KLSKR) carry the 'KMSKS' region motif. Lys270 is a binding site for ATP.

Belongs to the class-I aminoacyl-tRNA synthetase family. Glutamate--tRNA ligase type 1 subfamily. Monomer.

It is found in the cytoplasm. The enzyme catalyses tRNA(Glu) + L-glutamate + ATP = L-glutamyl-tRNA(Glu) + AMP + diphosphate. In terms of biological role, catalyzes the attachment of glutamate to tRNA(Glu) in a two-step reaction: glutamate is first activated by ATP to form Glu-AMP and then transferred to the acceptor end of tRNA(Glu). The chain is Glutamate--tRNA ligase from Clavibacter sepedonicus (Clavibacter michiganensis subsp. sepedonicus).